The sequence spans 356 residues: UDP-N-acetylglucosamine--N-acetylmuramyl-(pentapeptide) pyrophosphoryl-undecaprenol N-acetylglucosamine transferase (356 aa).

UDP-N-acetyl-alpha-D-glucosamine contacts are provided by residues 12 to 14, N124, R163, S188, I242, 261 to 266, and Q287; these read TGG and ALTVSE.

This sequence belongs to the glycosyltransferase 28 family. MurG subfamily.

Its subcellular location is the cell inner membrane. The enzyme catalyses di-trans,octa-cis-undecaprenyl diphospho-N-acetyl-alpha-D-muramoyl-L-alanyl-D-glutamyl-meso-2,6-diaminopimeloyl-D-alanyl-D-alanine + UDP-N-acetyl-alpha-D-glucosamine = di-trans,octa-cis-undecaprenyl diphospho-[N-acetyl-alpha-D-glucosaminyl-(1-&gt;4)]-N-acetyl-alpha-D-muramoyl-L-alanyl-D-glutamyl-meso-2,6-diaminopimeloyl-D-alanyl-D-alanine + UDP + H(+). It functions in the pathway cell wall biogenesis; peptidoglycan biosynthesis. Functionally, cell wall formation. Catalyzes the transfer of a GlcNAc subunit on undecaprenyl-pyrophosphoryl-MurNAc-pentapeptide (lipid intermediate I) to form undecaprenyl-pyrophosphoryl-MurNAc-(pentapeptide)GlcNAc (lipid intermediate II). This is UDP-N-acetylglucosamine--N-acetylmuramyl-(pentapeptide) pyrophosphoryl-undecaprenol N-acetylglucosamine transferase from Pseudomonas fluorescens (strain ATCC BAA-477 / NRRL B-23932 / Pf-5).